The chain runs to 995 residues: MFNRLNKFQAALALALYSQSALGQYYSNSTSISSNSSSTSVVSSSSGSVSISSSIAETSSSATDILSSITQSASSTSGVSSSVGPSSSSVVSSSVSQSSSSVSDVSSSVSQSSSSASDVSSSVSQSASSTSDVSSSVSQSSSSASDVSSSVSQSSSSASDVSSSVSQSASSASDVSSSVSQSASSTSDVSSSVSQSSSSASDVSSSVSQSSSSASDVSSSVSQSASSTSDVSSSVSQSASSTSGVSSSGSQSVSSASGSSSSFPQSTSSASTASGSATSNSLSSITSSASSASATASNSLSSSDGTIYLPTTTISGDLTLTGKVIATEGVVVAAGAKLTLLDGDKYSFSADLKVYGDLLVKKSKETYPGTEFDISGENFDVTGNFNAEESAATSASIYSFTPSSFDNSGDISLSLSKSKKGEVTFSPYSNSGAFSFSNAILNGGSVSGLQRRDDTEGSVNNGEINLDNGSTYVIVEPVSGKGTVNIISGNLYLHYPDTFTGQTVVFKGEGVLAVDPTETNATPIPVVGYTGKNQIAITADITALSYDGTTGVLTATQGNRQFSFAIGTGFSSSDFSVSEGIFAGAYAYYLNYNGVVATSAASSSTASGASASVTGSTSFGASVTGSTASTSFGASVTGSTASTSFGASVTGSTSVYTTTLDYVNATSTVVVSCSETTDSNGNVYTITTTVPCSSTTATITSCDETGCHVSTSTGAVVTETVSSKSYTTATVTHCDDNGCNTKTVTSECSKETSATTASPKSYTTVTVTHCDDNGCNTKTVTSEAPEATTTTTVSSQSYTTATVTHCDDNGCKTKTVTSEAPEATTTTVSPKTYTTATVTQCDDNGCSTKTVTSECPEETSATTTSPKSYTTVTVTHCDDNGCNTKTVTSEAPEATTTTVSPKTYTTATVTQCDDNGCSTKTVTSEAPKETSETSETSAAPKDIHYCHWLLNGDDNGCNVKIITSKIPEATSTVTQLVLLQSHTLLSLLRVLKQPH.

The first 23 residues, 1-23 (MFNRLNKFQAALALALYSQSALG), serve as a signal peptide directing secretion. The 228-residue stretch at 26–253 (YSNSTSISSN…GVSSSGSQSV (228 aa)) folds into the Methyl-accepting transducer domain. Residues asparagine 28 and asparagine 35 are each glycosylated (N-linked (GlcNAc...) asparagine). A disordered region spans residues 98 to 276 (SSSSVSDVSS…TSSASTASGS (179 aa)). N-linked (GlcNAc...) asparagine glycosylation is found at asparagine 468 and asparagine 664.

It belongs to the SRP1/TIP1 family.

The protein resides in the secreted. Secreted protein that may be involved in cell wall organization and biosynthesis. This chain is Secreted protein CSS1, found in Saccharomyces cerevisiae (strain ATCC 204508 / S288c) (Baker's yeast).